A 140-amino-acid chain; its full sequence is Nucleoside diphosphate kinase (140 aa).

ATP contacts are provided by Lys11, Phe59, Arg87, Thr93, Arg104, and Asn114. His117 acts as the Pros-phosphohistidine intermediate in catalysis.

The protein belongs to the NDK family. In terms of assembly, homotetramer. It depends on Mg(2+) as a cofactor.

Its subcellular location is the cytoplasm. The catalysed reaction is a 2'-deoxyribonucleoside 5'-diphosphate + ATP = a 2'-deoxyribonucleoside 5'-triphosphate + ADP. It carries out the reaction a ribonucleoside 5'-diphosphate + ATP = a ribonucleoside 5'-triphosphate + ADP. Functionally, major role in the synthesis of nucleoside triphosphates other than ATP. The ATP gamma phosphate is transferred to the NDP beta phosphate via a ping-pong mechanism, using a phosphorylated active-site intermediate. This Acidiphilium cryptum (strain JF-5) protein is Nucleoside diphosphate kinase.